The following is a 159-amino-acid chain: Small ribosomal subunit protein uS13 (159 aa).

Residues 136–159 (QRTRSTGRSGATVGVTRKKTQAKK) form a disordered region. Residues 138-149 (TRSTGRSGATVG) are compositionally biased toward low complexity.

Belongs to the universal ribosomal protein uS13 family. In terms of assembly, part of the 30S ribosomal subunit. Forms a loose heterodimer with protein S19. Forms two bridges to the 50S subunit in the 70S ribosome.

In terms of biological role, located at the top of the head of the 30S subunit, it contacts several helices of the 16S rRNA. In the 70S ribosome it contacts the 23S rRNA (bridge B1a) and protein L5 of the 50S subunit (bridge B1b), connecting the 2 subunits; these bridges are implicated in subunit movement. The protein is Small ribosomal subunit protein uS13 of Methanothrix thermoacetophila (strain DSM 6194 / JCM 14653 / NBRC 101360 / PT) (Methanosaeta thermophila).